A 245-amino-acid polypeptide reads, in one-letter code: Thioredoxin-like 1-2, chloroplastic (245 aa).

Residues 1 to 92 (MDAISSLGTN…TNHNMLEIQS (92 aa)) constitute a chloroplast transit peptide. One can recognise a Thioredoxin domain in the interval 93 to 194 (ANHLVDSLLN…FKKALDKHGS (102 aa)). Catalysis depends on nucleophile residues Cys-117 and Cys-120. A disulfide bridge links Cys-117 with Cys-120.

It belongs to the thioredoxin family.

Its subcellular location is the plastid. It localises to the chloroplast. In terms of biological role, probable thiol-disulfide oxidoreductase that may participate in various redox reactions. The sequence is that of Thioredoxin-like 1-2, chloroplastic from Arabidopsis thaliana (Mouse-ear cress).